The primary structure comprises 484 residues: MKFIVKLYPEIMMKSKPVRMRFTKMLETNIRNVLKKVDEDAKVQRQWDRIMVMVPKDKPELAQAFGERLACIPGIAHVVQVDEYSFESVDDIYQQVLPVYRDQLAGKTFCVRVKRTGDHDFNSIEVERYVGGGLNQFTDALGVRLKNPDITVNLEIERDNLYMVTKRIEGLGGFPMATQEDVLSLISGGFDSGVSSYQFIKKGARTHYCFFNLGGAQHEIGVKQVAYHLWKTYGESHKVKFISVPFEPVVAEILERIDNGQMGVVLKRMMMRTAARIADRMGIQALVTGESLGQVSSQTLTNLNVIDRCTELLILRPLIAMDKQDIINESRKIGTEDFAKSMPEYCGVISQKPTVKAVLAKVEAEEKKFSEDLIDQIIAQSVTIDIREIAEQMDTRITETETVASIDTNQVVIDIRAPEEEESKPLQIEGIEIKRIPFFKLATQFADLDKQKTYLLYCERGVMSKLQALYLIEQGYTNVKVYRP.

Positions 63–167 constitute a THUMP domain; sequence QAFGERLACI…RDNLYMVTKR (105 aa). ATP-binding positions include 185–186, K267, G289, and Q298; that span reads LI. C346 and C458 are joined by a disulfide. The region spanning 406 to 484 is the Rhodanese domain; that stretch reads IDTNQVVIDI…GYTNVKVYRP (79 aa). Residue C458 is the Cysteine persulfide intermediate of the active site.

Belongs to the ThiI family.

The protein localises to the cytoplasm. It carries out the reaction [ThiI sulfur-carrier protein]-S-sulfanyl-L-cysteine + a uridine in tRNA + 2 reduced [2Fe-2S]-[ferredoxin] + ATP + H(+) = [ThiI sulfur-carrier protein]-L-cysteine + a 4-thiouridine in tRNA + 2 oxidized [2Fe-2S]-[ferredoxin] + AMP + diphosphate. It catalyses the reaction [ThiS sulfur-carrier protein]-C-terminal Gly-Gly-AMP + S-sulfanyl-L-cysteinyl-[cysteine desulfurase] + AH2 = [ThiS sulfur-carrier protein]-C-terminal-Gly-aminoethanethioate + L-cysteinyl-[cysteine desulfurase] + A + AMP + 2 H(+). The protein operates within cofactor biosynthesis; thiamine diphosphate biosynthesis. Functionally, catalyzes the ATP-dependent transfer of a sulfur to tRNA to produce 4-thiouridine in position 8 of tRNAs, which functions as a near-UV photosensor. Also catalyzes the transfer of sulfur to the sulfur carrier protein ThiS, forming ThiS-thiocarboxylate. This is a step in the synthesis of thiazole, in the thiamine biosynthesis pathway. The sulfur is donated as persulfide by IscS. This chain is tRNA sulfurtransferase, found in Shewanella baltica (strain OS155 / ATCC BAA-1091).